The following is a 257-amino-acid chain: Snake venom serine protease KN11 (257 aa).

Positions 1–18 (MVLIRVLANLLILQLSYA) are cleaved as a signal peptide. A propeptide spanning residues 19–24 (QKSSEL) is cleaved from the precursor. Positions 25–248 (VTGGHPCNIN…HLDWIKSIIA (224 aa)) constitute a Peptidase S1 domain. 6 cysteine pairs are disulfide-bonded: Cys-31–Cys-162, Cys-49–Cys-65, Cys-97–Cys-255, Cys-141–Cys-209, Cys-173–Cys-188, and Cys-199–Cys-224. Active-site charge relay system residues include His-64 and Asp-109. N-linked (GlcNAc...) asparagine glycosylation is found at Asn-120 and Asn-121. The active-site Charge relay system is the Ser-203.

Belongs to the peptidase S1 family. Snake venom subfamily. Monomer. As to expression, expressed by the venom gland.

It is found in the secreted. Functionally, snake venom serine protease that may act in the hemostasis system of the prey. In Trimeresurus stejnegeri (Chinese green tree viper), this protein is Snake venom serine protease KN11.